The primary structure comprises 1033 residues: Complement receptor type 2 (1033 aa).

An N-terminal signal peptide occupies residues 1-20; that stretch reads MGAAGLLGVFLALVAPGVLG. 15 Sushi domains span residues 21–84, 89–148, 152–212, 213–273, 274–344, 349–408, 409–468, 469–524, 525–595, 600–659, 660–716, 717–781, 786–845, 849–909, and 910–970; these read ISCG…KCEY, SSCP…TCVS, LECP…TCEE, ARCK…VCEE, IFCP…RCEL, VQCP…VCEK, ECQA…QCKV, AACE…LCKE, ITCP…LCKL, VQCS…VCEK, ETCQ…LCKV, IHCH…QCLR, TRCP…TCIK, IGCP…HCKE, and VNCS…VCRS. Over 21-971 the chain is Extracellular; it reads ISCGSPPPIL…NPPLAVCRSR (951 aa). 28 disulfide bridges follow: Cys23–Cys65, Cys51–Cys82, Cys91–Cys132, Cys118–Cys146, Cys154–Cys197, Cys183–Cys210, Cys215–Cys256, Cys242–Cys271, Cys276–Cys325, Cys305–Cys342, Cys351–Cys393, Cys379–Cys406, Cys410–Cys453, Cys439–Cys466, Cys471–Cys509, Cys495–Cys522, Cys527–Cys576, Cys556–Cys593, Cys602–Cys644, Cys630–Cys657, Cys662–Cys699, Cys685–Cys714, Cys719–Cys762, Cys748–Cys779, Cys788–Cys830, Cys816–Cys843, Cys851–Cys894, and Cys880–Cys907. Asn121 and Asn127 each carry an N-linked (GlcNAc...) asparagine glycan. An N-linked (GlcNAc...) asparagine glycan is attached at Asn294. N-linked (GlcNAc...) asparagine glycosylation is present at Asn372. A glycan (N-linked (GlcNAc...) asparagine) is linked at Asn492. Asn623 carries an N-linked (GlcNAc...) asparagine glycan. Asn682 carries N-linked (GlcNAc...) asparagine glycosylation. 3 N-linked (GlcNAc...) asparagine glycosylation sites follow: Asn800, Asn823, and Asn861. N-linked (GlcNAc...) asparagine glycosylation is present at Asn911. 2 disulfides stabilise this stretch: Cys912–Cys955 and Cys941–Cys968. A helical transmembrane segment spans residues 972-999; sequence SLAPVLCGIAAGLILLTFLIVITLYVIS. Over 1000–1033 the chain is Cytoplasmic; sequence KHRARNYYTDTSQKEAFHLEAREVYSVDPYNPAS.

The protein belongs to the receptors of complement activation (RCA) family. As to quaternary structure, interacts (via Sushi domain 1 and 2) with C3. Interacts with CD19. Part of a complex composed of CD19, CR2/CD21, CD81 and IFITM1/CD225 in the membrane of mature B-cells. Interacts (via Sushi domain 1 and 2) with FCER2 (via the C-terminus). Interacts with CD23. Interacts with FCRL5. Interacts with CR1. Interacts with INFNA1. (Microbial infection) Interacts with Epstein-Barr virus gp350 protein. In terms of tissue distribution, mature B-lymphocytes, T-lymphocytes, pharyngeal epithelial cells, astrocytes and follicular dendritic cells of the spleen.

Its subcellular location is the cell membrane. Serves as a receptor for various ligands including complement component CD3d, HNRNPU OR IFNA1. When C3d is bound to antigens, attaches to C3d on B-cell surface and thereby facilitates the recognition and uptake of antigens by B-cells. This interaction enhances B-cell activation and subsequent immune responses. Forms a complex with several partners on the surface of B-cells including CD19, FCRL5 and CD81, to form the B-cell coreceptor complex that plays a crucial role in B-cell activation and signaling. Also induces specific intracellular signaling separately from the BCR and CD19 by activating the tyrosine kinase SRC, which then phosphorylates nucleolin/NCL and triggers AKT and GSK3 kinase activities in a SYK/CD19-independent manner. Acts as a ligand for CD23 (FcepsilonRII), a low-affinity receptor for IgE, which is expressed on B-cells and other immune cells, and thus participates in the regulation of IgE production. In terms of biological role, (Microbial infection) Acts as a receptor for Epstein-Barr virus. This is Complement receptor type 2 (CR2) from Homo sapiens (Human).